The following is a 303-amino-acid chain: GPN-loop GTPase 2 (303 aa).

Position 29 to 34 (29 to 34) interacts with GTP; sequence GSGKST. Positions 85 to 87 match the Gly-Pro-Asn (GPN)-loop; involved in dimer interface motif; that stretch reads GPN. Residue 187–190 coordinates GTP; that stretch reads SKMD.

Belongs to the GPN-loop GTPase family. In terms of assembly, heterodimers with gpn1 or gpn3. Binds to RNA polymerase II (RNAPII).

Small GTPase required for proper localization of RNA polymerase II and III (RNAPII and RNAPIII). May act at an RNAP assembly step prior to nuclear import. In Xenopus tropicalis (Western clawed frog), this protein is GPN-loop GTPase 2.